Here is a 68-residue protein sequence, read N- to C-terminus: Glucagon-1 (68 aa).

Belongs to the glucagon family.

It localises to the secreted. Functionally, promotes hydrolysis of glycogen and lipids, and raises the blood sugar level. This chain is Glucagon-1 (gcg), found in Oncorhynchus kisutch (Coho salmon).